The sequence spans 187 residues: Peptidyl-tRNA hydrolase (187 aa).

Tyr18 provides a ligand contact to tRNA. His23 serves as the catalytic Proton acceptor. Residues Phe65, Asn67, and Asn113 each contribute to the tRNA site.

It belongs to the PTH family. As to quaternary structure, monomer.

Its subcellular location is the cytoplasm. The catalysed reaction is an N-acyl-L-alpha-aminoacyl-tRNA + H2O = an N-acyl-L-amino acid + a tRNA + H(+). In terms of biological role, hydrolyzes ribosome-free peptidyl-tRNAs (with 1 or more amino acids incorporated), which drop off the ribosome during protein synthesis, or as a result of ribosome stalling. Its function is as follows. Catalyzes the release of premature peptidyl moieties from peptidyl-tRNA molecules trapped in stalled 50S ribosomal subunits, and thus maintains levels of free tRNAs and 50S ribosomes. The sequence is that of Peptidyl-tRNA hydrolase from Coxiella burnetii (strain CbuK_Q154) (Coxiella burnetii (strain Q154)).